Here is a 593-residue protein sequence, read N- to C-terminus: MHRELKEFSHPHGSTGIYEDNLQVDVLIVGAGFSGIYMLHELRKQGLKTVVYEAGSDLGGTWRFNCYPGARVDSQVPLYQFSIPETYKDWTWSTNYPDYKELRAYFDHVDKVLDIKKDVAFGSVVVDAQFDTSQSRWVVKTQDGRTAYAKYFIAAAGVSSKRYIPEWEGIENFKGPIHHTSFWPEHEVDVRGKRAAIIGTGASGVQVTQAWGPQAGHLKVFLRSPNYSIPMRRKELTADEQNQLKPIYPQLFDLREKTFTGALVDFSERSALEDSEAEREAFYEQRYQTGGFDFSTANYKDTMLNPVANRYLYDFWAKKTRARLNDERVKDLLAPVEPPYFFGGKRSSLETDFYEQFNRDTVELVDAKSNPIVGFTENGIKMQDGTVHEVDVVCLATGFDTTTGSMINLGVRSIHGTTLQEDWSQAAETYLGLTVSGYPNLFHLYGTHAPTLFSQAVTTIEVQGRWIVDAIKQMERQAIRSINPSREAAHAWKLQIRAFQNASFFPTVHSTYMGGSIPGKPFELVSYPAGMPMYARQIRDALPTFPGFEVVKADGEKVENLAPGGLEATTNFFERLFGMPPSSAKEDLAKQDH.

FAD-binding positions include 61 to 64, 73 to 74, and Tyr-79; these read TWRF and DS. Residue 71–73 coordinates NADP(+); sequence RVD. NADP(+) contacts are provided by residues 200–206 and 223–224; these read TGASGVQ and RS.

The protein belongs to the FAD-binding monooxygenase family. It depends on FAD as a cofactor.

It functions in the pathway secondary metabolite biosynthesis. Its function is as follows. FAD-binding monooxygenase; part of the cluster that mediates the biosynthesis of acurin A, a highly reduced polyketide coupled to a serine via a peptide bond. The activities of the highly reducing polyketide synthase acrA and the nonribosomal peptide synthetase acrB are collectively responsible for the synthesis of the acurin A core structure with a heptaketide backbone produced by acrA covalently fused to a L-serine by acrB. After the formation of the PK-NRP hybrid product, it is detached from acrB by reductive release to set up the formation of the lactam ring by aldol condensation. The hydrolyase acrC then catalyzes water loss to generate a double bond in the ring. This double bond is probably reduced, which is followed by three oxidations at C-22 to generate the carboxylic acid moiety, involving probably the FAD-binding monooxygenase acrE and the cytochrome P450 monooxygenases acrD and acrF. Finally, a last methylation step performed by the O-methyltransferase acrG leads to the production of acurin A. This is FAD-binding monooxygenase acrE from Aspergillus aculeatus (strain ATCC 16872 / CBS 172.66 / WB 5094).